A 205-amino-acid polypeptide reads, in one-letter code: Holliday junction branch migration complex subunit RuvA (205 aa).

The domain I stretch occupies residues 1–67; it reads MITSIFGKVT…QIIEEAFAFN (67 aa). The segment at 68–146 is domain II; the sequence is TLEEKEWFCR…NNKNIKGVQV (79 aa). Positions 147 to 150 are flexible linker; sequence ADGY. The interval 150-205 is domain III; sequence YDELFETLKSLGYKQQEIQDALKMIEVKPDFDISQLVAEVIKLMSFKNNEITNKTA.

It belongs to the RuvA family. In terms of assembly, homotetramer. Forms an RuvA(8)-RuvB(12)-Holliday junction (HJ) complex. HJ DNA is sandwiched between 2 RuvA tetramers; dsDNA enters through RuvA and exits via RuvB. An RuvB hexamer assembles on each DNA strand where it exits the tetramer. Each RuvB hexamer is contacted by two RuvA subunits (via domain III) on 2 adjacent RuvB subunits; this complex drives branch migration. In the full resolvosome a probable DNA-RuvA(4)-RuvB(12)-RuvC(2) complex forms which resolves the HJ.

It localises to the cytoplasm. In terms of biological role, the RuvA-RuvB-RuvC complex processes Holliday junction (HJ) DNA during genetic recombination and DNA repair, while the RuvA-RuvB complex plays an important role in the rescue of blocked DNA replication forks via replication fork reversal (RFR). RuvA specifically binds to HJ cruciform DNA, conferring on it an open structure. The RuvB hexamer acts as an ATP-dependent pump, pulling dsDNA into and through the RuvAB complex. HJ branch migration allows RuvC to scan DNA until it finds its consensus sequence, where it cleaves and resolves the cruciform DNA. This is Holliday junction branch migration complex subunit RuvA from Mycoplasma genitalium (strain ATCC 33530 / DSM 19775 / NCTC 10195 / G37) (Mycoplasmoides genitalium).